The following is a 353-amino-acid chain: Farnesyl pyrophosphate synthase (353 aa).

Lys57, Arg60, and Gln96 together coordinate isopentenyl diphosphate. An N6-(2-hydroxyisobutyryl)lysine; alternate modification is found at Lys57. At Lys57 the chain carries N6-acetyllysine; alternate. Mg(2+) is bound by residues Asp103 and Asp107. Arg112 is a binding site for dimethylallyl diphosphate. Arg113 serves as a coordination point for isopentenyl diphosphate. Residues Lys200, Thr201, Gln240, Lys257, and Lys266 each contribute to the dimethylallyl diphosphate site.

It belongs to the FPP/GGPP synthase family. In terms of assembly, homodimer. Interacts with RSAD2. Interacts with bovine leukemia virus (BLV) protein G4. The cofactor is Mg(2+).

It localises to the cytoplasm. The enzyme catalyses isopentenyl diphosphate + dimethylallyl diphosphate = (2E)-geranyl diphosphate + diphosphate. The catalysed reaction is isopentenyl diphosphate + (2E)-geranyl diphosphate = (2E,6E)-farnesyl diphosphate + diphosphate. It functions in the pathway isoprenoid biosynthesis; farnesyl diphosphate biosynthesis; farnesyl diphosphate from geranyl diphosphate and isopentenyl diphosphate: step 1/1. Its pathway is isoprenoid biosynthesis; geranyl diphosphate biosynthesis; geranyl diphosphate from dimethylallyl diphosphate and isopentenyl diphosphate: step 1/1. With respect to regulation, inactivated by interferon-induced RSAD2. This inactivation may result of disruption of lipid rafts at the plasma membrane, and thus have an antiviral effect since many enveloped viruses need lipid rafts to bud efficiently out of the cell. Key enzyme in isoprenoid biosynthesis which catalyzes the formation of farnesyl diphosphate (FPP), a precursor for several classes of essential metabolites including sterols, dolichols, carotenoids, and ubiquinones. FPP also serves as substrate for protein farnesylation and geranylgeranylation. Catalyzes the sequential condensation of isopentenyl pyrophosphate with the allylic pyrophosphates, dimethylallyl pyrophosphate, and then with the resultant geranylpyrophosphate to the ultimate product farnesyl pyrophosphate. The protein is Farnesyl pyrophosphate synthase (FDPS) of Bos taurus (Bovine).